The following is a 1112-amino-acid chain: DNA-directed RNA polymerase subunit beta (1112 aa).

The tract at residues 1087–1112 is disordered; sequence VGGRRTPNRPTYENIGGPREMEFSED.

It belongs to the RNA polymerase beta chain family. In terms of assembly, in cyanobacteria the RNAP catalytic core is composed of 2 alpha, 1 beta, 1 beta', 1 gamma and 1 omega subunit. When a sigma factor is associated with the core the holoenzyme is formed, which can initiate transcription.

It catalyses the reaction RNA(n) + a ribonucleoside 5'-triphosphate = RNA(n+1) + diphosphate. Functionally, DNA-dependent RNA polymerase catalyzes the transcription of DNA into RNA using the four ribonucleoside triphosphates as substrates. The polypeptide is DNA-directed RNA polymerase subunit beta (Gloeobacter violaceus (strain ATCC 29082 / PCC 7421)).